The chain runs to 31 residues: Photosystem II reaction center protein T (31 aa).

Residues 3–23 traverse the membrane as a helical segment; it reads AIVYTFLLVGTLGIIFFAIFF.

Belongs to the PsbT family. As to quaternary structure, PSII is composed of 1 copy each of membrane proteins PsbA, PsbB, PsbC, PsbD, PsbE, PsbF, PsbH, PsbI, PsbJ, PsbK, PsbL, PsbM, PsbT, PsbY, PsbZ, Psb30/Ycf12, at least 3 peripheral proteins of the oxygen-evolving complex and a large number of cofactors. It forms dimeric complexes.

The protein resides in the plastid. It localises to the chloroplast thylakoid membrane. In terms of biological role, found at the monomer-monomer interface of the photosystem II (PS II) dimer, plays a role in assembly and dimerization of PSII. PSII is a light-driven water plastoquinone oxidoreductase, using light energy to abstract electrons from H(2)O, generating a proton gradient subsequently used for ATP formation. The chain is Photosystem II reaction center protein T from Ostreococcus tauri.